Reading from the N-terminus, the 313-residue chain is MPIGDYELHKEIGKGAFSVVFLVTEKKTKKQWAMKIIDKKSSSKAALETEIEIMKKVDHPNIVKMHEYFESTDKIYLVVELVTGGPLFDRIVDKKSFTEKEAKLITQQLLQSLVYLHSIGIVHRDLKPENLLLKTPTDLTVALSDFGLSKIVGDDVFMKTTCGTPSYVAPEVLNNISNSPTAYSDAVDMWGVGVITYILLCGFPPFYSEDIRKLFESILSASYDFPNDYWGNVSKEAKHFINCLLTVEPTKRYSAKQALEHPWIIENNQTQPLPHWNDQIKKYMVIRRKESQKFGAELVWKPQAQTTNVKPTK.

The Protein kinase domain maps to 6–264; that stretch reads YELHKEIGKG…AKQALEHPWI (259 aa). ATP-binding positions include 12-20 and K35; that span reads IGKGAFSVV. The Proton acceptor role is filled by D125.

The protein belongs to the protein kinase superfamily. CAMK Ser/Thr protein kinase family. CaMK subfamily.

The catalysed reaction is L-seryl-[myosin light chain] + ATP = O-phospho-L-seryl-[myosin light chain] + ADP + H(+). It carries out the reaction L-threonyl-[myosin light chain] + ATP = O-phospho-L-threonyl-[myosin light chain] + ADP + H(+). Its activity is regulated as follows. Does not have a calmodulin-binding domain. May phosphorylate a specific serine in the N-terminus of a myosin light chain. The sequence is that of Probable myosin light chain kinase DDB_G0292624 from Dictyostelium discoideum (Social amoeba).